The chain runs to 250 residues: Exosome complex component Rrp41 (250 aa).

It belongs to the RNase PH family. Rrp41 subfamily. In terms of assembly, component of the archaeal exosome complex. Forms a hexameric ring-like arrangement composed of 3 Rrp41-Rrp42 heterodimers. The hexameric ring associates with a trimer of Rrp4 and/or Csl4 subunits.

The protein localises to the cytoplasm. Functionally, catalytic component of the exosome, which is a complex involved in RNA degradation. Has 3'-&gt;5' exoribonuclease activity. Can also synthesize heteromeric RNA-tails. This chain is Exosome complex component Rrp41, found in Pyrococcus furiosus (strain ATCC 43587 / DSM 3638 / JCM 8422 / Vc1).